Reading from the N-terminus, the 119-residue chain is Large ribosomal subunit protein bL20 (119 aa).

Belongs to the bacterial ribosomal protein bL20 family.

Functionally, binds directly to 23S ribosomal RNA and is necessary for the in vitro assembly process of the 50S ribosomal subunit. It is not involved in the protein synthesizing functions of that subunit. This chain is Large ribosomal subunit protein bL20, found in Herminiimonas arsenicoxydans.